The sequence spans 121 residues: Phosphoribosyl-AMP cyclohydrolase (121 aa).

A Mg(2+)-binding site is contributed by aspartate 74. Zn(2+) is bound at residue cysteine 75. 2 residues coordinate Mg(2+): aspartate 76 and aspartate 78. Residues cysteine 91 and cysteine 98 each coordinate Zn(2+).

This sequence belongs to the PRA-CH family. Homodimer. It depends on Mg(2+) as a cofactor. Zn(2+) serves as cofactor.

Its subcellular location is the cytoplasm. It catalyses the reaction 1-(5-phospho-beta-D-ribosyl)-5'-AMP + H2O = 1-(5-phospho-beta-D-ribosyl)-5-[(5-phospho-beta-D-ribosylamino)methylideneamino]imidazole-4-carboxamide. It functions in the pathway amino-acid biosynthesis; L-histidine biosynthesis; L-histidine from 5-phospho-alpha-D-ribose 1-diphosphate: step 3/9. Its function is as follows. Catalyzes the hydrolysis of the adenine ring of phosphoribosyl-AMP. The chain is Phosphoribosyl-AMP cyclohydrolase from Methanothrix thermoacetophila (strain DSM 6194 / JCM 14653 / NBRC 101360 / PT) (Methanosaeta thermophila).